Consider the following 157-residue polypeptide: UPF0225 protein PA14_50900 (157 aa).

Belongs to the UPF0225 family.

This chain is UPF0225 protein PA14_50900, found in Pseudomonas aeruginosa (strain UCBPP-PA14).